We begin with the raw amino-acid sequence, 429 residues long: Malate dehydrogenase [NADP] 1, chloroplastic (429 aa).

The transit peptide at 1-40 (MGLSTAYSPVGSHLAPAPLGHRRSAQLHRPRRALLATVRC) directs the protein to the chloroplast. C64 and C69 are disulfide-bonded. NADP(+) is bound at residue 93–99 (GAAGMIS). Substrate contacts are provided by R174 and R180. NADP(+) is bound by residues N187, Q194, and 211-213 (VGN). Substrate is bound by residues N213 and R244. H269 acts as the Proton acceptor in catalysis. C405 and C417 are disulfide-bonded.

This sequence belongs to the LDH/MDH superfamily. MDH type 2 family. In terms of assembly, homodimer.

It is found in the plastid. It localises to the chloroplast. It carries out the reaction (S)-malate + NADP(+) = oxaloacetate + NADPH + H(+). Chloroplast NADP-MDH is activated upon illumination. In order to be enzymatically active, disulfide bridges on the protein must be reduced by thioredoxin which receives electrons from ferredoxin and the electron transport system of photosynthesis. Functionally, the chloroplastic, NADP-dependent form is essential for the photosynthesis C4 cycle, which allows plants to circumvent the problem of photorespiration. In C4 plants, NADP-MDH activity acts to convert oxaloacetate to malate in chloroplasts of mesophyll cells for transport to the bundle sheath cells. The sequence is that of Malate dehydrogenase [NADP] 1, chloroplastic from Sorghum bicolor (Sorghum).